A 420-amino-acid polypeptide reads, in one-letter code: Sodium/proton antiporter 2 (420 aa).

11 consecutive transmembrane segments (helical) span residues I25 to I45, I60 to F80, I94 to T114, L136 to V156, I173 to L193, L221 to G241, L242 to I262, G285 to L305, L321 to A341, F363 to M383, and F400 to L420.

Belongs to the NhaD Na(+)/H(+) (TC 2.A.62) antiporter family.

It localises to the membrane. Na(+)/H(+) antiporter that extrudes sodium in exchange for external protons. This chain is Sodium/proton antiporter 2, found in Arabidopsis thaliana (Mouse-ear cress).